The sequence spans 248 residues: Pyridoxine 5'-phosphate synthase (248 aa).

N8 and R19 together coordinate 3-amino-2-oxopropyl phosphate. The active-site Proton acceptor is the H44. 1-deoxy-D-xylulose 5-phosphate contacts are provided by R46 and H51. E76 serves as the catalytic Proton acceptor. T106 lines the 1-deoxy-D-xylulose 5-phosphate pocket. The Proton donor role is filled by H200. 3-amino-2-oxopropyl phosphate-binding positions include D201 and 223 to 224; that span reads GH.

This sequence belongs to the PNP synthase family. As to quaternary structure, homooctamer; tetramer of dimers.

The protein localises to the cytoplasm. It carries out the reaction 3-amino-2-oxopropyl phosphate + 1-deoxy-D-xylulose 5-phosphate = pyridoxine 5'-phosphate + phosphate + 2 H2O + H(+). Its pathway is cofactor biosynthesis; pyridoxine 5'-phosphate biosynthesis; pyridoxine 5'-phosphate from D-erythrose 4-phosphate: step 5/5. Catalyzes the complicated ring closure reaction between the two acyclic compounds 1-deoxy-D-xylulose-5-phosphate (DXP) and 3-amino-2-oxopropyl phosphate (1-amino-acetone-3-phosphate or AAP) to form pyridoxine 5'-phosphate (PNP) and inorganic phosphate. This chain is Pyridoxine 5'-phosphate synthase, found in Chelativorans sp. (strain BNC1).